The sequence spans 393 residues: Succinate--CoA ligase [ADP-forming] subunit beta (393 aa).

In terms of domain architecture, ATP-grasp spans 9–251 (KALFEKFGVL…LNEEDPKEIE (243 aa)). ATP-binding positions include lysine 46, 53–55 (GRG), serine 109, and glutamate 114. Mg(2+) contacts are provided by asparagine 206 and aspartate 220. Residues asparagine 271 and 328 to 330 (GIM) contribute to the substrate site.

The protein belongs to the succinate/malate CoA ligase beta subunit family. In terms of assembly, heterotetramer of two alpha and two beta subunits. It depends on Mg(2+) as a cofactor.

It carries out the reaction succinate + ATP + CoA = succinyl-CoA + ADP + phosphate. The enzyme catalyses GTP + succinate + CoA = succinyl-CoA + GDP + phosphate. It participates in carbohydrate metabolism; tricarboxylic acid cycle; succinate from succinyl-CoA (ligase route): step 1/1. Its function is as follows. Succinyl-CoA synthetase functions in the citric acid cycle (TCA), coupling the hydrolysis of succinyl-CoA to the synthesis of either ATP or GTP and thus represents the only step of substrate-level phosphorylation in the TCA. The beta subunit provides nucleotide specificity of the enzyme and binds the substrate succinate, while the binding sites for coenzyme A and phosphate are found in the alpha subunit. The polypeptide is Succinate--CoA ligase [ADP-forming] subunit beta (Opitutus terrae (strain DSM 11246 / JCM 15787 / PB90-1)).